The primary structure comprises 431 residues: Ornithine aminotransferase, mitochondrial (431 aa).

At Lys286 the chain carries N6-(pyridoxal phosphate)lysine.

This sequence belongs to the class-III pyridoxal-phosphate-dependent aminotransferase family. Homotetramer. Requires pyridoxal 5'-phosphate as cofactor.

The protein resides in the mitochondrion matrix. The catalysed reaction is a 2-oxocarboxylate + L-ornithine = L-glutamate 5-semialdehyde + an L-alpha-amino acid. Its pathway is amino-acid biosynthesis; L-proline biosynthesis; L-glutamate 5-semialdehyde from L-ornithine: step 1/1. This Drosophila melanogaster (Fruit fly) protein is Ornithine aminotransferase, mitochondrial (Oat).